The following is a 250-amino-acid chain: uncharacterized protein (250 aa).

The protein to Synechocystis PCC 6803 sll0249.

This is an uncharacterized protein from Nostoc sp. (strain PCC 7120 / SAG 25.82 / UTEX 2576).